Here is an 86-residue protein sequence, read N- to C-terminus: Exodeoxyribonuclease 7 small subunit (86 aa).

This sequence belongs to the XseB family. As to quaternary structure, heterooligomer composed of large and small subunits.

Its subcellular location is the cytoplasm. It catalyses the reaction Exonucleolytic cleavage in either 5'- to 3'- or 3'- to 5'-direction to yield nucleoside 5'-phosphates.. Bidirectionally degrades single-stranded DNA into large acid-insoluble oligonucleotides, which are then degraded further into small acid-soluble oligonucleotides. This is Exodeoxyribonuclease 7 small subunit from Xanthomonas axonopodis pv. citri (strain 306).